Reading from the N-terminus, the 213-residue chain is Orotate phosphoribosyltransferase (213 aa).

Lysine 26 serves as a coordination point for 5-phospho-alpha-D-ribose 1-diphosphate. Phenylalanine 34–phenylalanine 35 contributes to the orotate binding site. 5-phospho-alpha-D-ribose 1-diphosphate is bound by residues tyrosine 72 to lysine 73, arginine 99, lysine 100, lysine 103, histidine 105, and aspartate 124 to alanine 132. 2 residues coordinate orotate: threonine 128 and arginine 156.

It belongs to the purine/pyrimidine phosphoribosyltransferase family. PyrE subfamily. As to quaternary structure, homodimer. The cofactor is Mg(2+).

It catalyses the reaction orotidine 5'-phosphate + diphosphate = orotate + 5-phospho-alpha-D-ribose 1-diphosphate. Its pathway is pyrimidine metabolism; UMP biosynthesis via de novo pathway; UMP from orotate: step 1/2. In terms of biological role, catalyzes the transfer of a ribosyl phosphate group from 5-phosphoribose 1-diphosphate to orotate, leading to the formation of orotidine monophosphate (OMP). The polypeptide is Orotate phosphoribosyltransferase (Shigella sonnei (strain Ss046)).